A 316-amino-acid chain; its full sequence is Ribosomal RNA large subunit methyltransferase F (316 aa).

The disordered stretch occupies residues 200–222 (EEANKSTSRKVSNLNPKEKKNTN). Polar residues predominate over residues 204-214 (KSTSRKVSNLN).

This sequence belongs to the methyltransferase superfamily. METTL16/RlmF family.

Its subcellular location is the cytoplasm. The catalysed reaction is adenosine(1618) in 23S rRNA + S-adenosyl-L-methionine = N(6)-methyladenosine(1618) in 23S rRNA + S-adenosyl-L-homocysteine + H(+). Functionally, specifically methylates the adenine in position 1618 of 23S rRNA. This chain is Ribosomal RNA large subunit methyltransferase F, found in Flavobacterium johnsoniae (strain ATCC 17061 / DSM 2064 / JCM 8514 / BCRC 14874 / CCUG 350202 / NBRC 14942 / NCIMB 11054 / UW101) (Cytophaga johnsonae).